The sequence spans 78 residues: Conotoxin Cl14.9 (78 aa).

Residues 1–22 (MTAKATLLVLALVVMATSGVSS) form the signal peptide. The propeptide occupies 23-47 (ASVAGGPVVNSDTVSRSDPERLSTR). Position 70 is an isoleucine amide (Ile70). Residues 74–78 (DITQQ) constitute a propeptide that is removed on maturation.

Post-translationally, contains 2 disulfide bonds. As to expression, expressed by the venom duct.

Its subcellular location is the secreted. The sequence is that of Conotoxin Cl14.9 from Californiconus californicus (California cone).